We begin with the raw amino-acid sequence, 269 residues long: 3'(2'),5'-bisphosphate nucleotidase CysQ (269 aa).

The Mg(2+) site is built by Glu69, Asp89, Leu91, Asp92, and Asp216. Glu69 contributes to the substrate binding site. Residues 91 to 94 (LDGT) and Asp216 contribute to the substrate site.

The protein belongs to the inositol monophosphatase superfamily. CysQ family. The cofactor is Mg(2+).

It is found in the cell inner membrane. The catalysed reaction is adenosine 3',5'-bisphosphate + H2O = AMP + phosphate. Its function is as follows. Converts adenosine-3',5'-bisphosphate (PAP) to AMP. This Aggregatibacter actinomycetemcomitans (Actinobacillus actinomycetemcomitans) protein is 3'(2'),5'-bisphosphate nucleotidase CysQ.